Here is a 103-residue protein sequence, read N- to C-terminus: uncharacterized protein (103 aa).

Residues 1-10 are compositionally biased toward basic residues; it reads MVVKKSKPKN. Disordered stretches follow at residues 1–38 and 77–103; these read MVVKKSKPKNQIRVEDLDLPKLNTSKNPQTKIQKKGKK and AVFSKQSDRKISNNKADKKTGRKNEKK.

This is an uncharacterized protein from Schizosaccharomyces pombe (strain 972 / ATCC 24843) (Fission yeast).